The sequence spans 468 residues: GTPase Der (468 aa).

EngA-type G domains are found at residues 3 to 167 and 179 to 352; these read PTLV…PYAE and PVIA…TAAM. Residues 9–16, 56–60, 119–122, 185–192, 232–236, and 297–300 each bind GTP; these read GRPNVGKS, DTGGF, NKAE, DTAGL, and NKWD. One can recognise a KH-like domain in the interval 353–437; it reads AHIPTPKLTR…PLRVEFRTGH (85 aa). Residues 434-468 form a disordered region; that stretch reads RTGHNPYAGKKAPPLTEEEARRAHSRRRRNRKKYG. Over residues 456–468 the composition is skewed to basic residues; it reads AHSRRRRNRKKYG.

It belongs to the TRAFAC class TrmE-Era-EngA-EngB-Septin-like GTPase superfamily. EngA (Der) GTPase family. In terms of assembly, associates with the 50S ribosomal subunit.

In terms of biological role, GTPase that plays an essential role in the late steps of ribosome biogenesis. The chain is GTPase Der from Nitrosomonas eutropha (strain DSM 101675 / C91 / Nm57).